Reading from the N-terminus, the 535-residue chain is uncharacterized protein (535 aa).

Residues 8 to 24 (LVVFGSLVFFFGLVKYF) traverse the membrane as a helical segment. Residue lysine 50 forms a Glycyl lysine isopeptide (Lys-Gly) (interchain with G-Cter in ubiquitin) linkage. The Mn(2+) site is built by aspartate 316, aspartate 327, histidine 412, glutamate 452, and glutamate 493.

This sequence belongs to the peptidase M24B family. Requires Mn(2+) as cofactor.

It is found in the membrane. This is an uncharacterized protein from Saccharomyces cerevisiae (strain ATCC 204508 / S288c) (Baker's yeast).